Here is a 739-residue protein sequence, read N- to C-terminus: Phosphoribosylformylglycinamidine synthase subunit PurL (739 aa).

H54 is an active-site residue. Residues Y57 and K96 each contribute to the ATP site. Mg(2+) is bound at residue E98. Residues 99-102 and R121 contribute to the substrate site; that span reads SHNH. The Proton acceptor role is filled by H100. D122 contributes to the Mg(2+) binding site. Q245 is a substrate binding site. D275 is a Mg(2+) binding site. 319–321 is a substrate binding site; that stretch reads ESQ. ATP contacts are provided by D504 and G541. N542 is a Mg(2+) binding site. S544 is a substrate binding site.

The protein belongs to the FGAMS family. As to quaternary structure, monomer. Part of the FGAM synthase complex composed of 1 PurL, 1 PurQ and 2 PurS subunits.

It localises to the cytoplasm. It carries out the reaction N(2)-formyl-N(1)-(5-phospho-beta-D-ribosyl)glycinamide + L-glutamine + ATP + H2O = 2-formamido-N(1)-(5-O-phospho-beta-D-ribosyl)acetamidine + L-glutamate + ADP + phosphate + H(+). Its pathway is purine metabolism; IMP biosynthesis via de novo pathway; 5-amino-1-(5-phospho-D-ribosyl)imidazole from N(2)-formyl-N(1)-(5-phospho-D-ribosyl)glycinamide: step 1/2. Part of the phosphoribosylformylglycinamidine synthase complex involved in the purines biosynthetic pathway. Catalyzes the ATP-dependent conversion of formylglycinamide ribonucleotide (FGAR) and glutamine to yield formylglycinamidine ribonucleotide (FGAM) and glutamate. The FGAM synthase complex is composed of three subunits. PurQ produces an ammonia molecule by converting glutamine to glutamate. PurL transfers the ammonia molecule to FGAR to form FGAM in an ATP-dependent manner. PurS interacts with PurQ and PurL and is thought to assist in the transfer of the ammonia molecule from PurQ to PurL. The protein is Phosphoribosylformylglycinamidine synthase subunit PurL of Lactococcus lactis subsp. cremoris (Streptococcus cremoris).